A 346-amino-acid polypeptide reads, in one-letter code: MARPQRTPARSPDSIVEVKSKFDAEFRRFALPRASVSGFQEFSRLLRAVHQIPGLDVLLGYTDAHGDLLPLTNDDSLHRALASGPPPLRLLVQKRAEADSSGLAFASNSLQRRKKGLLLRPVAPLRTRPPLLISLPQDFRQVSSVIDVDLLPETHRRVRLHKHGSDRPLGFYIRDGMSVRVAPQGLERVPGIFISRLVRGGLAESTGLLAVSDEILEVNGIEVAGKTLDQVTDMMVANSHNLIVTVKPANQRNNVVRGASGRLTGPPSAGPGPAEPDSDDDSSDLVIENRQPPSSNGLSQGPPCWDLHPGCRHPGTRSSLPSLDDQEQASSGWGSRIRGDGSGFSL.

The tract at residues 1 to 116 (MARPQRTPAR…SNSLQRRKKG (116 aa)) is interaction with PRKCI and PRKCZ. Positions 15-95 (IVEVKSKFDA…PPLRLLVQKR (81 aa)) constitute a PB1 domain. The interval 126 to 253 (RTRPPLLISL…VTVKPANQRN (128 aa)) is interaction with PARD3 and CDC42. The Pseudo-CRIB domain occupies 133 to 150 (ISLPQDFRQVSSVIDVDL). The PDZ domain maps to 157 to 250 (RVRLHKHGSD…NLIVTVKPAN (94 aa)). Positions 257–346 (RGASGRLTGP…IRGDGSGFSL (90 aa)) are disordered. 2 positions are modified to phosphoserine: Ser278 and Ser345.

It belongs to the PAR6 family. Interacts with MAP2K5. Interacts with PARD3. Interacts with GTP-bound forms of CDC42, RHOQ/TC10 and RAC1. Interacts with the N-terminal part of PRKCI and PRKCZ. Part of a complex with PARD3, CDC42 or RAC1 and PRKCI or PRKCZ. Part of a complex with LLGL1 and PRKCI. Interacts with human T-cell leukemia virus type I TAX protein. Interacts with PALS1 and CRB3. Interacts with TGFBR1; involved in TGF-beta induced epithelial to mesenchymal transition. Interacts with ECT2 ('Thr-359' phosphorylated form) and PRKCI. Interacts with DCTN1 and PCM1. Post-translationally, phosphorylated by the TGF-beta receptor. In terms of processing, ubiquitinated by the SCF(FBXO31) complex, leading to its proteasomal degradation. In terms of tissue distribution, expressed in pancreas, skeletal muscle, brain and heart. Weakly expressed in kidney and placenta.

The protein localises to the cytoplasm. Its subcellular location is the cell membrane. The protein resides in the cell projection. It localises to the ruffle. It is found in the cell junction. The protein localises to the tight junction. Its subcellular location is the cytoskeleton. The protein resides in the microtubule organizing center. It localises to the centrosome. It is found in the centriolar satellite. In terms of biological role, adapter protein involved in asymmetrical cell division and cell polarization processes. Probably involved in the formation of epithelial tight junctions. Association with PARD3 may prevent the interaction of PARD3 with F11R/JAM1, thereby preventing tight junction assembly. The PARD6-PARD3 complex links GTP-bound Rho small GTPases to atypical protein kinase C proteins. Regulates centrosome organization and function. Essential for the centrosomal recruitment of key proteins that control centrosomal microtubule organization. The protein is Partitioning defective 6 homolog alpha (PARD6A) of Homo sapiens (Human).